Reading from the N-terminus, the 5251-residue chain is Dynein heavy chain-like protein 2 (5251 aa).

Kelch repeat units follow at residues 37 to 87, 95 to 143, 266 to 317, 318 to 367, and 372 to 421; these read GLFL…CYHN, YVII…LQNG, SLIL…IHGN, NLFI…LVES, and IIFI…QNNE. Residues 140-188 are disordered; sequence LQNGINGTNEKGYISQTDDENCSDNKYGENQDYGSNDSDSKDGEDIDKD. The segment at 686–732 is disordered; that stretch reads NNIEQRNNNNDNNDNNNNDNNNNNNNDNNNNNNNNNNNNNNNNDNLN. Positions 692 to 730 are enriched in low complexity; it reads NNNNDNNDNNNNDNNNNNNNDNNNNNNNNNNNNNNNNDN. Coiled coils occupy residues 1155–1225 and 1544–1610; these read DNII…KKIK and KLNN…KLIS. The segment at 1554–1598 is disordered; the sequence is EKNKNANENSNEIETNKYNKKEELTNNRDGDGDDDDNIKNDKDEK. Positions 1567 to 1583 are enriched in basic and acidic residues; that stretch reads ETNKYNKKEELTNNRDG. The Kelch 6 repeat unit spans residues 1639 to 1685; the sequence is HIKYTLKYYITNLFRLKDLFNNEKEKWIDENYLAQVFILCNTIFFVN. Residues 1802–1825 are disordered; that stretch reads HQEGKQEYNNKNNDNDNNNNNNNN. Low complexity predominate over residues 1810–1825; that stretch reads NNKNNDNDNNNNNNNN. 1895–1902 is a binding site for ATP; sequence GPAGTGKT. Residues 2136-2188 adopt a coiled-coil conformation; it reads NDINENKKEKDNIEELKSDNVKEEKKTKKKHLEDNNNNKKKELFNLNNIEKEL. The disordered stretch occupies residues 2152–2171; sequence KSDNVKEEKKTKKKHLEDNN. Residue 2224–2231 participates in ATP binding; that stretch reads GEAGCGKT. Residues 2447–2494 form a Kelch 7 repeat; sequence VIWCFGGFLGEKDNVNYKKSFDKYWKNTFKSIKVNRKISVFDFYVENN. Residues 2546-2553 and 2890-2897 each bind ATP; these read GKTGVGKT and GIGGCGKT. Composition is skewed to low complexity over residues 3138-3154 and 3652-3671; these read DNNN…DGNN and DQNF…NSTN. 6 disordered regions span residues 3138–3163, 3652–3686, 4042–4250, 4280–4299, 4773–4824, and 4910–4948; these read DNNN…EGND, DQNF…NHNN, EDND…EENV, NGKI…DFEN, MDFH…ENEE, and KIIK…HSGS. The span at 4059 to 4086 shows a compositional bias: acidic residues; the sequence is KMEDEEKMEEEKVDEEKMEEEKVDEEKM. Positions 4087–4247 are enriched in basic and acidic residues; the sequence is EDEKVEEKME…EKGEEQKAEE (161 aa). 2 stretches are compositionally biased toward acidic residues: residues 4289–4299 and 4807–4823; these read DDLEEEEDFEN and DDDD…EENE. Positions 4912-4937 are enriched in basic and acidic residues; it reads IKKEKPGDNKDNKYTHDQKKETIHKE.

It belongs to the dynein heavy chain family. As to quaternary structure, consists of at least two heavy chains and a number of intermediate and light chains.

The protein resides in the cytoplasm. It localises to the cytoskeleton. Its function is as follows. Acts as a motor for the intracellular retrograde motility of vesicles and organelles along microtubules. Dynein has ATPase activity; the force-producing power stroke is thought to occur on release of ADP. This Plasmodium falciparum (isolate 3D7) protein is Dynein heavy chain-like protein 2.